Reading from the N-terminus, the 152-residue chain is Anaerobic nitrite reductase SYMA (152 aa).

A Globin domain is found at 2–151 (ALTERQEALL…LVATIKAEMK (150 aa)). The Homodimerization signature appears at 35-39 (EAAPE). Serine 45, lysine 59, histidine 63, arginine 93, and histidine 98 together coordinate heme b. A Homodimerization motif is present at residues 105-117 (DPHFEVMKGALLG).

The protein belongs to the plant globin family. As to quaternary structure, homodimer. The cofactor is heme b. As to expression, root nodules.

It is found in the cytoplasm. Its subcellular location is the nucleus. It catalyses the reaction Fe(III)-heme b-[protein] + nitric oxide + H2O = Fe(II)-heme b-[protein] + nitrite + 2 H(+). Its function is as follows. Phytoglobin that reduces nitrite to nitric oxide (NO) under anoxic conditions (e.g. during flooding or in waterlogged soil) and upon root nodulation. Required for general plant development and during nodulation, especially for the onset of symbiosis. Monitors nitric oxide (NO) levels during early phase of the nitrogen-fixing symbiosis and buffers oxygen in functioning nodules. May not function as an oxygen storage or transport protein. Has an unusually high affinity for O(2) through a hexacoordinate heme iron because of a very low dissociation constant. This chain is Anaerobic nitrite reductase SYMA, found in Casuarina glauca (Swamp oak).